Here is a 397-residue protein sequence, read N- to C-terminus: Tyrosine--tRNA ligase (397 aa).

The 'HIGH' region signature appears at 41 to 50 (PTAPDLHLGH). Positions 225-229 (KMSKS) match the 'KMSKS' region motif. Lysine 228 serves as a coordination point for ATP. The 57-residue stretch at 340 to 396 (AFLADSGLAGSRGEAKRLIKQGALSLDGEKLDDPNTPLTAGEYVVRLGKKRFLRLIV) folds into the S4 RNA-binding domain.

It belongs to the class-I aminoacyl-tRNA synthetase family. TyrS type 2 subfamily. Homodimer.

The protein localises to the cytoplasm. It catalyses the reaction tRNA(Tyr) + L-tyrosine + ATP = L-tyrosyl-tRNA(Tyr) + AMP + diphosphate + H(+). In terms of biological role, catalyzes the attachment of tyrosine to tRNA(Tyr) in a two-step reaction: tyrosine is first activated by ATP to form Tyr-AMP and then transferred to the acceptor end of tRNA(Tyr). The protein is Tyrosine--tRNA ligase of Oleidesulfovibrio alaskensis (strain ATCC BAA-1058 / DSM 17464 / G20) (Desulfovibrio alaskensis).